Consider the following 119-residue polypeptide: MSAPINKEKVEQEAEQQIHKIRITLTSTKVKQLENVSANIIRNAAQYNIVKKGPVRMPTKVLKITTRKTPNGEGSKTWDAYEMRIHKRVIDLQAPASTVKRITQITIEPGVDVEVTIAA.

The protein belongs to the universal ribosomal protein uS10 family. As to quaternary structure, component of the small ribosomal subunit. Mature ribosomes consist of a small (40S) and a large (60S) subunit. The 40S subunit contains about 32 different proteins and 1 molecule of RNA (18S). The 60S subunit contains 45 different proteins and 3 molecules of RNA (25S, 5.8S and 5S).

The protein resides in the cytoplasm. Component of the ribosome, a large ribonucleoprotein complex responsible for the synthesis of proteins in the cell. The small ribosomal subunit (SSU) binds messenger RNAs (mRNAs) and translates the encoded message by selecting cognate aminoacyl-transfer RNA (tRNA) molecules. The large subunit (LSU) contains the ribosomal catalytic site termed the peptidyl transferase center (PTC), which catalyzes the formation of peptide bonds, thereby polymerizing the amino acids delivered by tRNAs into a polypeptide chain. The nascent polypeptides leave the ribosome through a tunnel in the LSU and interact with protein factors that function in enzymatic processing, targeting, and the membrane insertion of nascent chains at the exit of the ribosomal tunnel. This chain is Small ribosomal subunit protein uS10 (RPS20), found in Candida albicans (strain SC5314 / ATCC MYA-2876) (Yeast).